Consider the following 443-residue polypeptide: Xaa-Pro dipeptidase (443 aa).

Mn(2+) contacts are provided by D244, D255, H336, E381, and E420.

The protein belongs to the peptidase M24B family. Bacterial-type prolidase subfamily. It depends on Mn(2+) as a cofactor.

The catalysed reaction is Xaa-L-Pro dipeptide + H2O = an L-alpha-amino acid + L-proline. In terms of biological role, splits dipeptides with a prolyl residue in the C-terminal position. This chain is Xaa-Pro dipeptidase, found in Stenotrophomonas maltophilia (strain K279a).